Reading from the N-terminus, the 477-residue chain is Ubiquitin carboxyl-terminal hydrolase 7 (477 aa).

Residues 2-77 (LTVSVKWQKK…LMMMGTADEI (76 aa)) form the Ubiquitin-like domain. One can recognise a USP domain in the interval 104-473 (AGLVNLGNTC…MAYIVMYKAR (370 aa)). The Nucleophile role is filled by Cys113. Residues 171–190 (MPFWMVLQKKYPQFAQLHNG) are calmodulin-binding. The tract at residues 364-401 (QASAKSSSKGDDVKMTDAEGSSNQSGESSTGDQQEGAS) is disordered. The segment covering 371–380 (SKGDDVKMTD) has biased composition (basic and acidic residues). Residues 382–399 (EGSSNQSGESSTGDQQEG) are compositionally biased toward polar residues. His425 serves as the catalytic Proton acceptor.

This sequence belongs to the peptidase C19 family. Interacts with calmodulin (CaM).

It carries out the reaction Thiol-dependent hydrolysis of ester, thioester, amide, peptide and isopeptide bonds formed by the C-terminal Gly of ubiquitin (a 76-residue protein attached to proteins as an intracellular targeting signal).. In terms of biological role, recognizes and hydrolyzes the peptide bond at the C-terminal Gly of ubiquitin. Involved in the processing of poly-ubiquitin precursors as well as that of ubiquitinated proteins. The protein is Ubiquitin carboxyl-terminal hydrolase 7 (UBP7) of Arabidopsis thaliana (Mouse-ear cress).